The following is a 304-amino-acid chain: Voltage-dependent anion channel-forming protein YneE (304 aa).

4 consecutive transmembrane segments (helical) span residues 28–48, 50–70, 194–214, and 220–240; these read LLLNFLFSIAVIFMLPWYTHL, IKFTLAPFSILGVAIAIFLGF, VLAGCERIAYTPIPFAYTLIL, and LFCIMLPFALVVDLHYMTPFI.

The protein belongs to the anion channel-forming bestrophin (TC 1.A.46) family.

It localises to the cell membrane. The chain is Voltage-dependent anion channel-forming protein YneE (yneE) from Escherichia coli (strain K12).